A 276-amino-acid polypeptide reads, in one-letter code: Undecaprenyl-diphosphatase (276 aa).

7 helical membrane passes run 42–62 (AVTA…IVYF), 88–108 (ALLG…GYLG), 116–136 (LRSL…IVYA), 149–169 (MRLP…VPGV), 187–207 (VAAT…AGIF), 222–242 (SLVV…AWLL), and 253–273 (FVWY…TGLV).

Belongs to the UppP family.

Its subcellular location is the cell membrane. The enzyme catalyses di-trans,octa-cis-undecaprenyl diphosphate + H2O = di-trans,octa-cis-undecaprenyl phosphate + phosphate + H(+). Catalyzes the dephosphorylation of undecaprenyl diphosphate (UPP). Confers resistance to bacitracin. This chain is Undecaprenyl-diphosphatase, found in Acidothermus cellulolyticus (strain ATCC 43068 / DSM 8971 / 11B).